A 231-amino-acid polypeptide reads, in one-letter code: Staphylococcal superantigen-like 7 (231 aa).

The first 30 residues, Met1 to Ala30, serve as a signal peptide directing secretion.

It belongs to the staphylococcal/streptococcal toxin family. Interacts with host IgA and complement C5; these interactions inhibits complement activation.

The protein localises to the secreted. Plays a role in the inhibition of host complement-mediated lysis and serum bactericidal activity by interacting with complement component C5. Affects all three pathways of complement activation and inhibits the cleavage of C5 by preventing its binding to C5 convertases. In turn, prevents C5a-mediated neutrophil migration. The protein is Staphylococcal superantigen-like 7 of Staphylococcus aureus (strain NCTC 8325 / PS 47).